The primary structure comprises 349 residues: MAEFIRTQIFGTCFEITTRYSDLQPIGMGAFGLVCSAKDQLTGMNVAVKKIMKPFSTPVLAKRTYRELKLLKHLRHENIISLSDIFISPFEDIYFVTELLGTDLHRLLTSRPLETQFIQYFLYQILRGLKFVHSAGVIHRDLKPSNILINENCDLKICDFGLARIQDPQMTGYVSTRYYRAPEIMLTWQKYNVEVDIWSAGCIFAEMIEGKPLFPGRDHVNQFSIITELLGTPPMEVIETICSKNTLRFVQSLPQKEKVPFAEKFKNADPDAIDLLEKMLVFDPRKRISAADALAHNYLAPYHDPTDEPVADEVFDWSFQDNDLPVETWKVMMYSEVLSFHNMDNELQS.

Residues Tyr-20 to Leu-299 form the Protein kinase domain. Residues Ile-26 to Val-34 and Lys-49 contribute to the ATP site. The active-site Proton acceptor is Asp-141. Thr-171 carries the post-translational modification Phosphothreonine. The short motif at Thr-171–Tyr-173 is the TXY element. Tyr-173 bears the Phosphotyrosine mark. Position 175 is a phosphoserine (Ser-175). Residue Thr-176 is modified to Phosphothreonine. The TXY motif lies at Thr-176–Tyr-178.

It belongs to the protein kinase superfamily. Ser/Thr protein kinase family. MAP kinase subfamily. HOG1 sub-subfamily. Interacts with cdc37, cmk2, hal4, sin1 and srk1. It depends on Mg(2+) as a cofactor. Post-translationally, dually phosphorylated on Thr-171 and Tyr-173, which activates the enzyme. Phosphorylated by wis1 in response to osmotic stress, nutrient limitation, hydrogen peroxide and arsenite. Dephosphorylated by pyp1 and pyp2.

It is found in the cytoplasm. Its subcellular location is the nucleus. The enzyme catalyses L-seryl-[protein] + ATP = O-phospho-L-seryl-[protein] + ADP + H(+). The catalysed reaction is L-threonyl-[protein] + ATP = O-phospho-L-threonyl-[protein] + ADP + H(+). With respect to regulation, activated by the MAPK kinase wisl, and negatively regulated by pypl and pyp2 tyrosine phosphatases. Functionally, proline-directed serine/threonine-protein kinase involved in a signal transduction pathway that is activated by changes in the osmolarity of the extracellular environment. Controls osmotic regulation of transcription of target genes. Involved in osmoregulation and stress response pathways leading to an efficient start of sexual differentiation. Supports translation initiation and facilitates adaptation to environmental stress in part through reducing eIF2-alpha phosphorylation. Links the cell-cycle G2/M control with changes in the extracellular environment that affect cell physiology. Phosphorylates atf1 and mkp1. In conjunction with hal4, has a role in the cellular resistance to toxic cations such as Na(+), Li(+) and Ca(2+). Involved in resistance to arsenite, methylglyoxal and hydrogen peroxide. Involved in induction of thermotolerance in mRNA export, as well as in vacuolar fission. The sequence is that of Mitogen-activated protein kinase sty1 (sty1) from Schizosaccharomyces pombe (strain 972 / ATCC 24843) (Fission yeast).